The sequence spans 187 residues: Probable chorismate pyruvate-lyase (187 aa).

3 residues coordinate substrate: Arg80, Leu118, and Glu170.

It belongs to the UbiC family.

Its subcellular location is the cytoplasm. It carries out the reaction chorismate = 4-hydroxybenzoate + pyruvate. The protein operates within cofactor biosynthesis; ubiquinone biosynthesis. Its function is as follows. Removes the pyruvyl group from chorismate, with concomitant aromatization of the ring, to provide 4-hydroxybenzoate (4HB) for the ubiquinone pathway. The chain is Probable chorismate pyruvate-lyase from Pseudomonas fluorescens (strain ATCC BAA-477 / NRRL B-23932 / Pf-5).